We begin with the raw amino-acid sequence, 103 residues long: Small ribosomal subunit protein uS10 (103 aa).

The protein belongs to the universal ribosomal protein uS10 family. Part of the 30S ribosomal subunit.

Its function is as follows. Involved in the binding of tRNA to the ribosomes. The chain is Small ribosomal subunit protein uS10 from Alkalilimnicola ehrlichii (strain ATCC BAA-1101 / DSM 17681 / MLHE-1).